The primary structure comprises 245 residues: uncharacterized protein (245 aa).

Positions 1–27 are cleaved as a signal peptide; sequence MKLKKRVSMFLVALTMCGGLFVTPAKA.

This is an uncharacterized protein from Bacillus subtilis (strain 168).